Reading from the N-terminus, the 784-residue chain is Protein Skeletor, isoforms B/C (784 aa).

The N-terminal stretch at 1–28 (MLAMKDKPWLLLFGLLAALSCLASFGDA) is a signal peptide. DM13 domains follow at residues 34–143 (GTKI…VSIP) and 151–258 (PQKI…VRLP). The DOMON domain occupies 287-419 (LAFEVRWAVA…GAESVVWAIG (133 aa)). The interval 451-491 (PLPEGARGNSNSSEQEDSAPAAQSSTGGAGYPPAGRPNVEP) is disordered.

Interacts with Chro and Mgtor as part of a macromolecular complex forming the spindle matrix. Chro colocalizes with Skeletor (Skel) on the chromosomes at interphase and on spindle during metaphase.

The protein resides in the cytoplasm. It localises to the cytoskeleton. Its subcellular location is the spindle. The protein localises to the nucleus. It is found in the nucleolus. The protein resides in the chromosome. Its function is as follows. Provides structural support to stabilize and organize the microtubule spindle during mitosis (within embryonic somatic cells) and meiosis (within spermatocytes). The role in mitosis regulation depends on the Ran pathway. The chain is Protein Skeletor, isoforms B/C from Drosophila melanogaster (Fruit fly).